The chain runs to 122 residues: Ribosome-binding factor A (122 aa).

Belongs to the RbfA family. In terms of assembly, monomer. Binds 30S ribosomal subunits, but not 50S ribosomal subunits or 70S ribosomes.

The protein resides in the cytoplasm. In terms of biological role, one of several proteins that assist in the late maturation steps of the functional core of the 30S ribosomal subunit. Associates with free 30S ribosomal subunits (but not with 30S subunits that are part of 70S ribosomes or polysomes). Required for efficient processing of 16S rRNA. May interact with the 5'-terminal helix region of 16S rRNA. The polypeptide is Ribosome-binding factor A (Cupriavidus necator (strain ATCC 17699 / DSM 428 / KCTC 22496 / NCIMB 10442 / H16 / Stanier 337) (Ralstonia eutropha)).